Here is a 271-residue protein sequence, read N- to C-terminus: Oxamate carbamoyltransferase subunit AllH (271 aa).

This sequence belongs to the AllH family. As to quaternary structure, the OXTCase is composed of 3 subunits, AllF, AllG and AllH. It depends on Mg(2+) as a cofactor.

The enzyme catalyses oxamate + carbamoyl phosphate = N-carbamoyl-2-oxoglycine + phosphate. It participates in nitrogen metabolism; (S)-allantoin degradation. In terms of biological role, component of a carbamoyltransferase involved in the anaerobic nitrogen utilization via the assimilation of allantoin. Catalyzes the conversion of oxalurate (N-carbamoyl-2-oxoglycine) to oxamate and carbamoyl phosphate. This is Oxamate carbamoyltransferase subunit AllH from Escherichia coli O157:H7.